Reading from the N-terminus, the 338-residue chain is Solute carrier family 35 member B1 homolog (338 aa).

Helical transmembrane passes span 9–29, 53–73, 84–104, 111–131, 135–155, 168–188, 213–233, 244–264, and 284–304; these read FVIY…VQEK, LALV…LLTI, GSYV…NMAM, TAVV…VLIG, YSWT…LFMY, TLLG…TGAV, LMLG…YFTI, LIAV…ASFG, and VLLF…LVFA. The Di-lysine motif motif lies at 334–338; that stretch reads KKLNS.

The protein belongs to the nucleotide-sugar transporter family. SLC35B subfamily.

It localises to the endoplasmic reticulum membrane. In terms of biological role, probable sugar transporter. This is Solute carrier family 35 member B1 homolog (meigo) from Drosophila melanogaster (Fruit fly).